The sequence spans 953 residues: Kinesin-like protein KIF23 (953 aa).

A Nuclear localization signal motif is present at residues 7-11 (KTVRK). The Kinesin motor domain occupies 25–436 (PVGVYCRVRP…MRFAEVTQEV (412 aa)). 112–119 (GVTGSGKT) lines the ATP pocket. Residues serine 155 and serine 160 each carry the phosphoserine modification. Residues 542–618 (QEKLNEREKV…RRLEARLQGM (77 aa)) are a coiled coil. Residues lysine 572 and lysine 587 each participate in a glycyl lysine isopeptide (Lys-Gly) (interchain with G-Cter in SUMO2) cross-link. Phosphoserine is present on serine 606. Glycyl lysine isopeptide (Lys-Gly) (interchain with G-Cter in SUMO2) cross-links involve residues lysine 625, lysine 648, lysine 663, and lysine 666. Residues 658–695 (IVTEPKPEKPERPSRERDREKIIPRSVSPSPLPLSSNN) are disordered. The segment covering 662–680 (PKPEKPERPSRERDREKII) has biased composition (basic and acidic residues). Positions 681–693 (PRSVSPSPLPLSS) are enriched in low complexity. A phosphoserine mark is found at serine 683 and serine 685. At threonine 739 the chain carries Phosphothreonine. A Phosphoserine modification is found at serine 807. Residues lysine 816 and lysine 847 each participate in a glycyl lysine isopeptide (Lys-Gly) (interchain with G-Cter in SUMO2) cross-link. Position 860 is a phosphoserine (serine 860). Residues lysine 867, lysine 870, and lysine 892 each participate in a glycyl lysine isopeptide (Lys-Gly) (interchain with G-Cter in SUMO2) cross-link. Disordered stretches follow at residues 894–921 (ELPTGSRKRRSSTLAPAQPDGTESEWTD) and 934–953 (AGSQLGPGYQHHAQPKRKKP). The residue at position 904 (serine 904) is a Phosphoserine. At threonine 920 the chain carries Phosphothreonine. Lysine 949 is covalently cross-linked (Glycyl lysine isopeptide (Lys-Gly) (interchain with G-Cter in SUMO2)).

The protein belongs to the TRAFAC class myosin-kinesin ATPase superfamily. Kinesin family. Heterotetramer of two molecules each of RACGAP1 and KIF23. Found in the centralspindlin complex. Interacts with RACGAP1; the interaction is direct. Interacts with ECT2 and PRC1. Interacts with ANXA11 during cytokinesis. Interacts with BIRC6/bruce and USP8/UBPY. Interacts with ARF6, forming heterodimers and heterotetramers. Ubiquitinated. Deubiquitinated by USP8/UBPY. Detected in testis and ovary from newborn mice (at protein level). Detected in brain, spinal cord and small intestine.

Its subcellular location is the nucleus. The protein resides in the cytoplasm. It localises to the cytoskeleton. It is found in the spindle. The protein localises to the midbody. Its subcellular location is the midbody ring. In terms of biological role, component of the centralspindlin complex that serves as a microtubule-dependent and Rho-mediated signaling required for the myosin contractile ring formation during the cell cycle cytokinesis. Essential for cytokinesis in Rho-mediated signaling. Required for the localization of ECT2 to the central spindle. Plus-end-directed motor enzyme that moves antiparallel microtubules in vitro. In Mus musculus (Mouse), this protein is Kinesin-like protein KIF23 (Kif23).